Consider the following 481-residue polypeptide: GTPase Obg (481 aa).

An Obg domain is found at 2–159; it reads TTFVDRVVLH…IDVVLELKSV (158 aa). The OBG-type G domain maps to 160–330; it reads ADVGLVGYPS…LMYAMGELVT (171 aa). Residues 166-173, 191-195, 212-215, 282-285, and 311-313 contribute to the GTP site; these read GYPSAGKS, FTTLV, DVPG, NKVD, and SAA. Positions 173 and 193 each coordinate Mg(2+). The region spanning 348–426 is the OCT domain; it reads PKAVDDAGFT…IGEREFDWQP (79 aa). Basic and acidic residues predominate over residues 439–452; it reads GDQRLAEKSERPSA. The tract at residues 439–481 is disordered; it reads GDQRLAEKSERPSATERLAARKARRQRPEDEAEADEPVGDGEE. The span at 468–481 shows a compositional bias: acidic residues; it reads DEAEADEPVGDGEE.

Belongs to the TRAFAC class OBG-HflX-like GTPase superfamily. OBG GTPase family. In terms of assembly, monomer. Mg(2+) is required as a cofactor.

It is found in the cytoplasm. In terms of biological role, an essential GTPase which binds GTP, GDP and possibly (p)ppGpp with moderate affinity, with high nucleotide exchange rates and a fairly low GTP hydrolysis rate. Plays a role in control of the cell cycle, stress response, ribosome biogenesis and in those bacteria that undergo differentiation, in morphogenesis control. The polypeptide is GTPase Obg (Salinispora tropica (strain ATCC BAA-916 / DSM 44818 / JCM 13857 / NBRC 105044 / CNB-440)).